We begin with the raw amino-acid sequence, 79 residues long: Acyl carrier protein (79 aa).

The Carrier domain maps to 6–79 (KEILDGLAEI…VQDVINYIQK (74 aa)). Residue Ser41 is modified to O-(pantetheine 4'-phosphoryl)serine.

This sequence belongs to the acyl carrier protein (ACP) family. Post-translationally, 4'-phosphopantetheine is transferred from CoA to a specific serine of apo-ACP by AcpS. This modification is essential for activity because fatty acids are bound in thioester linkage to the sulfhydryl of the prosthetic group.

The protein resides in the cytoplasm. Its pathway is lipid metabolism; fatty acid biosynthesis. In terms of biological role, carrier of the growing fatty acid chain in fatty acid biosynthesis. In Thermobifida fusca (strain YX), this protein is Acyl carrier protein.